The primary structure comprises 549 residues: Undecaprenyl phosphate-alpha-4-amino-4-deoxy-L-arabinose arabinosyl transferase 2 (549 aa).

12 helical membrane-spanning segments follow: residues L9 to I29, L80 to A102, S112 to A132, N133 to L153, F176 to L196, L204 to L224, F259 to F279, G290 to G310, L312 to A332, A342 to V362, S377 to F397, and C402 to P422.

It belongs to the glycosyltransferase 83 family.

Its subcellular location is the cell inner membrane. It catalyses the reaction 4-amino-4-deoxy-alpha-L-arabinopyranosyl di-trans,octa-cis-undecaprenyl phosphate + lipid IVA = lipid IIA + di-trans,octa-cis-undecaprenyl phosphate.. Its pathway is lipopolysaccharide metabolism; 4-amino-4-deoxy-beta-L-arabinose-lipid A biosynthesis. Catalyzes the transfer of the L-Ara4N moiety of the glycolipid undecaprenyl phosphate-alpha-L-Ara4N to lipid A. The modified arabinose is attached to lipid A and is required for resistance to polymyxin and cationic antimicrobial peptides. The sequence is that of Undecaprenyl phosphate-alpha-4-amino-4-deoxy-L-arabinose arabinosyl transferase 2 from Pseudomonas fluorescens (strain Pf0-1).